Reading from the N-terminus, the 320-residue chain is ATP-dependent 6-phosphofructokinase (320 aa).

G12 lines the ATP pocket. ADP-binding positions include 22 to 26 (RGVVR) and 55 to 60 (RYSVSD). ATP is bound by residues 73 to 74 (RF) and 103 to 106 (GDGS). Mg(2+) is bound at residue D104. 126-128 (TID) is a substrate binding site. D128 (proton acceptor) is an active-site residue. An ADP-binding site is contributed by R155. Substrate is bound by residues R163 and 170–172 (MGR). Residues 186-188 (GCE), K212, and 214-216 (KKH) each bind ADP. Substrate contacts are provided by residues E223, R244, and 250 to 253 (HIQR).

Belongs to the phosphofructokinase type A (PFKA) family. ATP-dependent PFK group I subfamily. Prokaryotic clade 'B1' sub-subfamily. In terms of assembly, homotetramer. The cofactor is Mg(2+).

The protein localises to the cytoplasm. It carries out the reaction beta-D-fructose 6-phosphate + ATP = beta-D-fructose 1,6-bisphosphate + ADP + H(+). Its pathway is carbohydrate degradation; glycolysis; D-glyceraldehyde 3-phosphate and glycerone phosphate from D-glucose: step 3/4. Allosterically activated by ADP and other diphosphonucleosides, and allosterically inhibited by phosphoenolpyruvate. In terms of biological role, catalyzes the phosphorylation of D-fructose 6-phosphate to fructose 1,6-bisphosphate by ATP, the first committing step of glycolysis. In Pectobacterium carotovorum subsp. carotovorum (strain PC1), this protein is ATP-dependent 6-phosphofructokinase.